The following is a 305-amino-acid chain: GPI-anchored hemophore cfmA (305 aa).

The first 18 residues, 1–18, serve as a signal peptide directing secretion; it reads MKASVSLLLLSAASMASA. The CFEM domain occupies 19-111; it reads AMSVSQCAQM…GSGSGSDSGS (93 aa). Cystine bridges form between Cys25–Cys68, Cys29–Cys63, Cys42–Cys49, and Cys51–Cys84. Residue Asp46 coordinates heme. Residues 92 to 287 are disordered; sequence TATGAGGSSS…STGNVAPRGA (196 aa). The span at 95–149 shows a compositional bias: gly residues; the sequence is GAGGSSSGSGSGSDSGSGSGSGSGSGSGSGSGSGSSSGSGSGSGSGSGSGSGSNS. Composition is skewed to low complexity over residues 150–186, 196–259, and 267–287; these read GSGS…NSTT, GASS…TATG, and GSAS…PRGA. Residues Asn183, Asn203, Asn237, Asn243, and Asn275 are each glycosylated (N-linked (GlcNAc...) asparagine). Ser276 is lipidated: GPI-like-anchor amidated serine. A propeptide spans 277 to 305 (removed in mature form); sequence SSTGNVAPRGAVVGSGAVGALALAALIIL.

Belongs to the RBT5 family. Post-translationally, the GPI-like anchor contains a phosphoceramide lipid group. In terms of processing, the GPI-anchor is attached to the protein in the endoplasmic reticulum and serves to target the protein to the cell surface. There, the glucosamine-inositol phospholipid moiety is cleaved off and the GPI-modified mannoprotein is covalently attached via its lipidless GPI glycan remnant to the 1,6-beta-glucan of the outer cell wall layer.

Its subcellular location is the secreted. The protein resides in the cell wall. The protein localises to the cell membrane. In terms of biological role, GPI-anchored cell wall protein involved in stabilizing the cell wall. Not implicated in virulence, heme uptake and biofilm formation. The sequence is that of GPI-anchored hemophore cfmA from Aspergillus fumigatus (strain ATCC MYA-4609 / CBS 101355 / FGSC A1100 / Af293) (Neosartorya fumigata).